A 313-amino-acid chain; its full sequence is UbiA prenyltransferase claS (313 aa).

2 helical membrane passes run 30 to 52 and 57 to 79; these read FAGT…RALL and TFGT…GCIW. Positions 81 to 88 match the NDxxDxxxD motif; it reads DILDQDFD. Mg(2+) contacts are provided by D84 and D88. The next 3 membrane-spanning stretches (helical) occupy residues 99-121, 131-148, and 155-177; these read IASG…FILM, AWMI…IYPL, and WPQA…YTTG. Positions 205 and 209 each coordinate Mg(2+). Residues 205-209 carry the DxxxD motif; that stretch reads DKKDD. The short motif at 205 to 209 is the YxxxK element; the sequence is DKKDD. 3 consecutive transmembrane segments (helical) span residues 227–247, 250–270, and 293–313; these read PVLS…GILN, ELPY…TQLW, and AIVW…GAIM.

Belongs to the UbiA prenyltransferase family. Mg(2+) is required as a cofactor.

The protein localises to the membrane. It catalyses the reaction hydroquinone + (2E)-geranyl diphosphate = (2E)-geranylhydroquinone + diphosphate. Its pathway is secondary metabolite biosynthesis; terpenoid biosynthesis. Its function is as follows. Prenyltransferase; part of the gene cluster that mediates the biosynthesis of clavilactone A, a meroterpenoid that features a unique benzo-fused ten-membered carbocyclic ring unit with an alpha,beta-epoxy-gamma-lactone moiety, forming an intriguing 10/5/3 tricyclic nested skeleton. ClaR, ClaS and ClaT are sufficient to produce clavilactone A. Within the pathway, claS acts as an atypical UbiA prenyltransferase that transfers geranyl pyrophosphate (GPP) to hydroquinone (HYQ) instead of p-hydroxybenzoic acid (PHB), producing the first intermediate geranylhydroquinone. The cytochrome P450 monooxygenase claR then catalyzes the diradical coupling reaction between the intramolecular hydroquinone and allyl moieties to form the benzo-fused ten-membered carbocyclic ring unit of wigantol. Finally the cytochrome P450 monooxygenase claT exquisitely and stereoselectively assembles the alpha,beta-epoxy-gamma-lactone moiety, producing clavilactone A via arnebinol A. The protein is UbiA prenyltransferase claS of Ampulloclitocybe clavipes (Club foot).